The chain runs to 449 residues: tRNA (guanine(37)-N(1))-methyltransferase (449 aa).

S-adenosyl-L-methionine-binding positions include His-216, 254-255 (DL), 282-283 (DG), and Asn-345.

This sequence belongs to the class I-like SAM-binding methyltransferase superfamily. TRM5/TYW2 family. In terms of assembly, monomer.

It localises to the mitochondrion matrix. The protein resides in the nucleus. The protein localises to the cytoplasm. It catalyses the reaction guanosine(37) in tRNA + S-adenosyl-L-methionine = N(1)-methylguanosine(37) in tRNA + S-adenosyl-L-homocysteine + H(+). Its function is as follows. Specifically methylates the N1 position of guanosine-37 in various cytoplasmic and mitochondrial tRNAs. Methylation is not dependent on the nature of the nucleoside 5' of the target nucleoside. This is the first step in the biosynthesis of wybutosine (yW), a modified base adjacent to the anticodon of tRNAs and required for accurate decoding. The sequence is that of tRNA (guanine(37)-N(1))-methyltransferase from Candida albicans (strain SC5314 / ATCC MYA-2876) (Yeast).